The primary structure comprises 372 residues: Heat-inducible transcription repressor HrcA (372 aa).

Residues 300–334 (YGRSGAAGEPAGNDPVGEPETESETESQTNDTEPI) are disordered.

Belongs to the HrcA family.

In terms of biological role, negative regulator of class I heat shock genes (grpE-dnaK-dnaJ and groELS operons). Prevents heat-shock induction of these operons. This is Heat-inducible transcription repressor HrcA from Bifidobacterium longum (strain DJO10A).